Consider the following 290-residue polypeptide: Picrinine-N-methytransferase TMT4 (290 aa).

Residues 71 to 80 are SAM motif I; the sequence is MLDVGCGIGG. Positions 133-139 match the Vacuolar targeting signal motif; that stretch reads DGTFDVV. Residues 134–142 are SAM motif II; that stretch reads GTFDVVFTI. Residues 161–170 form an SAM motif III region; sequence VAAPGAAIVI.

Belongs to the class I-like SAM-binding methyltransferase superfamily. gTMT family. As to quaternary structure, homodimer.

The protein resides in the vacuole membrane. It catalyses the reaction picrinine + S-adenosyl-L-methionine = ervincine + S-adenosyl-L-homocysteine + H(+). It participates in alkaloid biosynthesis; vindoline biosynthesis. Functionally, S-adenosyl-L-methionine-dependent N-methyltransferase involved in the biosynthesis of biologically active monoterpenoid indole alkaloids (MIAs) natural products including vindoline. Catalyzes the conversion of picrinine to N-methylpicrinine (ervincine). The sequence is that of Picrinine-N-methytransferase TMT4 from Catharanthus roseus (Madagascar periwinkle).